A 405-amino-acid chain; its full sequence is Argininosuccinate synthase (405 aa).

Residue 12–20 participates in ATP binding; it reads AYSGGLDTS. 2 residues coordinate L-citrulline: Y92 and S97. G122 is an ATP binding site. Residues T124, N128, and D129 each coordinate L-aspartate. N128 contributes to the L-citrulline binding site. Positions 132, 181, 190, 266, and 278 each coordinate L-citrulline.

The protein belongs to the argininosuccinate synthase family. Type 1 subfamily. Homotetramer.

It is found in the cytoplasm. The enzyme catalyses L-citrulline + L-aspartate + ATP = 2-(N(omega)-L-arginino)succinate + AMP + diphosphate + H(+). The protein operates within amino-acid biosynthesis; L-arginine biosynthesis; L-arginine from L-ornithine and carbamoyl phosphate: step 2/3. The polypeptide is Argininosuccinate synthase (Cronobacter sakazakii (strain ATCC BAA-894) (Enterobacter sakazakii)).